We begin with the raw amino-acid sequence, 150 residues long: Transcriptional regulator MraZ (150 aa).

2 consecutive SpoVT-AbrB domains span residues 9–54 (QSIH…PPEE) and 83–126 (AEEC…NKST).

This sequence belongs to the MraZ family. In terms of assembly, forms oligomers.

It localises to the cytoplasm. The protein resides in the nucleoid. The polypeptide is Transcriptional regulator MraZ (Syntrophobacter fumaroxidans (strain DSM 10017 / MPOB)).